Consider the following 153-residue polypeptide: Spanin, inner membrane subunit (153 aa).

Topologically, residues 1-3 (MSR) are cytoplasmic. Residues 4–24 (VTAIISALVICIIVCLSWAVN) traverse the membrane as a helical; Signal-anchor for type II membrane protein segment. At 25-153 (HYRDNAITYK…TQKYINEQCR (129 aa)) the chain is on the periplasmic side. Residues 65–92 (DAKYTKELADAKAENDALRDDVAAGRRR) are a coiled coil.

Belongs to the Lambdavirus i-spanin family. As to quaternary structure, homodimer; disulfide-linked. Interacts (via C-terminus) with the spanin outer lipoprotein subunit (via C-terminus). Part of the spanin complex which spans the entire periplasmic space. The spanin complex is composed of one homodimer of the i-spanin linked by intermolecular disulfide bonds involving two Cys residues and one homodimer of the o-spanin covalently linked by an intermolecular disulfide bond involving one Cys.

Its subcellular location is the host cell inner membrane. Its function is as follows. Component of the spanin complex that disrupts the host outer membrane and participates in cell lysis during virus exit. The spanin complex conducts the final step in host lysis by disrupting the outer membrane after holin and endolysin have permeabilized the inner membrane and degraded the host peptidoglycans. Host outer membrane disruption is due to local fusion between the inner and outer membrane performed by the spanin complex. The protein is Spanin, inner membrane subunit (Rz) of Escherichia phage lambda (Bacteriophage lambda).